The following is a 204-amino-acid chain: Methyl-CpG-binding domain protein 3-like 2B (204 aa).

The segment covering Ser126–Ser137 has biased composition (basic and acidic residues). Residues Ser126–Arg145 form a disordered region.

It belongs to the MBD3L family.

This is Methyl-CpG-binding domain protein 3-like 2B from Homo sapiens (Human).